The sequence spans 295 residues: Indole-3-glycerol phosphate synthase (295 aa).

The protein belongs to the TrpC family.

It carries out the reaction 1-(2-carboxyphenylamino)-1-deoxy-D-ribulose 5-phosphate + H(+) = (1S,2R)-1-C-(indol-3-yl)glycerol 3-phosphate + CO2 + H2O. Its pathway is amino-acid biosynthesis; L-tryptophan biosynthesis; L-tryptophan from chorismate: step 4/5. In Prochlorococcus marinus (strain NATL2A), this protein is Indole-3-glycerol phosphate synthase.